Here is an 825-residue protein sequence, read N- to C-terminus: MLDICLEKRVGTTLAAPKCNSSTVRFQGLAEGTKGTMKMDMEDADMTLWTEAEFEEKCTYIVNDHPWDSGADGGTSVQAEASLPRNLLFKYATNSEEVIGVMSKEYIPKGTRFGPLIGEIYTNDTVPKNANRKYFWRIYSRGELHHFIDGFNEEKSNWMRYVNPAHSPREQNLAACQNGMNIYFYTIKPIPANQELLVWYCRDFAERLHYPYPGELTMMNLTQTQSSLKQPSTEKNELCPKNVPKREYSVKEILKLDSNPSKGKDLYRSNISPLTSEKDLDDFRRRGSPEMPFYPRVVYPIRAPLPEDFLKASLAYGIERPTYITRSPIPSSTTPSPSARSSPDQSLKSSSPHSSPGNTVSPVGPGSQEHRDSYAYLNASYGTEGLGSYPGYAPLPHLPPAFIPSYNAHYPKFLLPPYGMNCNGLSAVSSMNGINNFGLFPRLCPVYSNLLGGGSLPHPMLNPTSLPSSLPSDGARRLLQPEHPREVLVPAPHSAFSFTGAAASMKDKACSPTSGSPTAGTAATAEHVVQPKATSAAMAAPSSDEAMNLIKNKRNMTGYKTLPYPLKKQNGKIKYECNVCAKTFGQLSNLKVHLRVHSGERPFKCQTCNKGFTQLAHLQKHYLVHTGEKPHECQVCHKRFSSTSNLKTHLRLHSGEKPYQCKVCPAKFTQFVHLKLHKRLHTRERPHKCSQCHKNYIHLCSLKVHLKGNCAAAPAPGLPLEDLTRINEEIEKFDISDNADRLEDVEDDISVISVVEKEILAVVRKEKEETGLKVSLQRNMGNGLLSSGCSLYESSDLPLMKLPPSNPLPLVPVKVKQETVEPMDP.

One can recognise an SET domain in the interval 84–201 (PRNLLFKYAT…ANQELLVWYC (118 aa)). A compositionally biased stretch (low complexity) spans 324-361 (ITRSPIPSSTTPSPSARSSPDQSLKSSSPHSSPGNTVS). A disordered region spans residues 324–369 (ITRSPIPSSTTPSPSARSSPDQSLKSSSPHSSPGNTVSPVGPGSQE). Positions 527–574 (HVVQPKATSAAMAAPSSDEAMNLIKNKRNMTGYKTLPYPLKKQNGKIK) are interaction with PIAS1. C2H2-type zinc fingers lie at residues 575–597 (YECN…LRVH), 603–625 (FKCQ…YLVH), 631–653 (HECQ…LRLH), and 659–681 (YQCK…KRLH). Residue Lys-816 forms a Glycyl lysine isopeptide (Lys-Gly) (interchain with G-Cter in SUMO1); alternate linkage. A Glycyl lysine isopeptide (Lys-Gly) (interchain with G-Cter in SUMO2); alternate cross-link involves residue Lys-816.

The protein belongs to the class V-like SAM-binding methyltransferase superfamily. In terms of assembly, interacts with PRMT5. Interacts with FBXO10. Interacts with FBXO11. Interacts with multiple nuclear sumoylation E3 ligases, including CBX4, PIAS1, PIAS2, PIAS3, PIAS4, PML and RNF4, but not RANBP2. Interacts with LDB1, SMARCD3 and SMARCC1. Interacts with EEIG1; following TNFSF11/RANKL stimulation in bone marrow-derived macrophages, the interaction promotes the binding of PRDM1/BLIMP1 to the gene promoter of IRF8. Sumoylation at Lys-816 by PIAS1 augments transcriptional repressor activity, and is critical for plasma cell differentiation. Can be sumoylated with SUMO1 and SUMO2 by PML. Degradation of the wild-type protein mostly depends upon sumoylation, rather than ubiquitination. Desumoylated by SENP1 and SENP6. Post-translationally, ubiquitinated by the SCF(FBXO11) complex, leading to its degradation by the proteasome.

The protein localises to the nucleus. Its subcellular location is the cytoplasm. Transcription factor that mediates a transcriptional program in various innate and adaptive immune tissue-resident lymphocyte T cell types such as tissue-resident memory T (Trm), natural killer (trNK) and natural killer T (NKT) cells and negatively regulates gene expression of proteins that promote the egress of tissue-resident T-cell populations from non-lymphoid organs. Plays a role in the development, retention and long-term establishment of adaptive and innate tissue-resident lymphocyte T cell types in non-lymphoid organs, such as the skin and gut, but also in other nonbarrier tissues like liver and kidney, and therefore may provide immediate immunological protection against reactivating infections or viral reinfection. Binds specifically to the PRDI element in the promoter of the beta-interferon gene. Drives the maturation of B-lymphocytes into Ig secreting cells. Associates with the transcriptional repressor ZNF683 to chromatin at gene promoter regions. Binds to the promoter and acts as a transcriptional repressor of IRF8, thereby promotes transcription of osteoclast differentiation factors such as NFATC1 and EEIG1. This chain is PR domain zinc finger protein 1 (PRDM1), found in Homo sapiens (Human).